Here is a 232-residue protein sequence, read N- to C-terminus: 5'-methylthioadenosine/S-adenosylhomocysteine nucleosidase (232 aa).

Glu14 (proton acceptor) is an active-site residue. Residues Gly80, Val154, and 175–176 (ME) contribute to the substrate site. Asp199 (proton donor) is an active-site residue.

Belongs to the PNP/UDP phosphorylase family. MtnN subfamily.

The catalysed reaction is S-adenosyl-L-homocysteine + H2O = S-(5-deoxy-D-ribos-5-yl)-L-homocysteine + adenine. It catalyses the reaction S-methyl-5'-thioadenosine + H2O = 5-(methylsulfanyl)-D-ribose + adenine. It carries out the reaction 5'-deoxyadenosine + H2O = 5-deoxy-D-ribose + adenine. Its pathway is amino-acid biosynthesis; L-methionine biosynthesis via salvage pathway; S-methyl-5-thio-alpha-D-ribose 1-phosphate from S-methyl-5'-thioadenosine (hydrolase route): step 1/2. Functionally, catalyzes the irreversible cleavage of the glycosidic bond in both 5'-methylthioadenosine (MTA) and S-adenosylhomocysteine (SAH/AdoHcy) to adenine and the corresponding thioribose, 5'-methylthioribose and S-ribosylhomocysteine, respectively. Also cleaves 5'-deoxyadenosine, a toxic by-product of radical S-adenosylmethionine (SAM) enzymes, into 5-deoxyribose and adenine. This Actinobacillus pleuropneumoniae serotype 5b (strain L20) protein is 5'-methylthioadenosine/S-adenosylhomocysteine nucleosidase.